A 483-amino-acid chain; its full sequence is Putative inorganic phosphate cotransporter (483 aa).

The next 7 helical transmembrane spans lie at 64-84, 90-110, 187-207, 292-312, 349-369, 383-403, and 420-440; these read YILS…GILA, LRFL…VPVA, IFYV…IFVY, LPYL…DWMI, ALTL…YSGF, FLMS…PIAA, and IVFF…NIFG. The segment at 447-483 is disordered; sequence WDNPSEDEQKPALESSSTTNPPRLSNGSSAPRAISSS. Polar residues predominate over residues 460 to 483; sequence ESSSTTNPPRLSNGSSAPRAISSS.

This sequence belongs to the major facilitator superfamily. Sodium/anion cotransporter family.

The protein resides in the membrane. Its function is as follows. May be an inorganic phosphate cotransporter. This chain is Putative inorganic phosphate cotransporter (Picot), found in Drosophila ananassae (Fruit fly).